The chain runs to 376 residues: MENKVVEEKQVDKIPLMSPCKMGKFELCHRVVLAPLTRQRSYGYIPQPHAILHYSQRSTNGGLLIGEATVISETGIGYKDVPGIWTKEQVEAWKPIVDAVHAKGGIFFCQIWHVGRVSNKDFQPNGEDPISCTDRGLTPQIRSNGIDIAHFTRPRRLTTDEIPQIVNEFRVAARNAIEAGFDGVEIHGAHGYLIDQFMKDQVNDRSDKYGGSLENRCRFALEIVEAVANEIGSDRVGIRISPFAHYNEAGDTNPTALGLYMVESLNKYDLAYCHVVEPRMKTAWEKIECTESLVPMRKAYKGTFIVAGGYDREDGNRALIEDRADLVAYGRLFISNPDLPKRFELNAPLNKYNRDTFYTSDPIVGYTDYPFLETMT.

FMN-binding positions include proline 35 to threonine 37, alanine 68, and glutamine 110. Substrate is bound by residues serine 143 and histidine 187–histidine 190. Residue tyrosine 192 is the Proton donor of the active site. Arginine 239 provides a ligand contact to FMN. Arginine 279 provides a ligand contact to substrate. FMN-binding positions include glycine 309 and glycine 330–arginine 331.

Belongs to the NADH:flavin oxidoreductase/NADH oxidase family. It depends on FMN as a cofactor. As to expression, constitutively expressed in roots, leaves, cotyledons, cells culture and to a lower extent in flowers.

It localises to the cytoplasm. It carries out the reaction (1S,2S)-OPC-8 + NADP(+) = (9S,13S,15Z)-12-oxophyto-10,15-dienoate + NADPH + H(+). Its pathway is lipid metabolism; oxylipin biosynthesis. Specifically cleaves olefinic bonds in alpha,beta-unsaturated carbonyls and may be involved in detoxification or modification of these reactive compounds. May be involved in the biosynthesis or metabolism of oxylipin signaling molecules. In vitro, reduces 9R,13R-12-oxophyodienoic acid (9R,13R-OPDA) to 9R,13R-OPC-8:0, but not 9S,13S-OPDA, the natural precursor of jasmonic acid. Also reduces N-ethylmaleimide and maleic acid. This chain is 12-oxophytodienoate reductase 1 (OPR1), found in Solanum lycopersicum (Tomato).